The primary structure comprises 395 residues: Obg-like ATPase 1 (395 aa).

The 259-residue stretch at 22-280 folds into the OBG-type G domain; that stretch reads LKVGILGLPN…MPEDERQKYL (259 aa). 31–36 contacts ATP; it reads NVGKST. 2 residues coordinate Mg(2+): Ser-35 and Thr-55. Leu-228 provides a ligand contact to ATP. The TGS domain occupies 301-384; that stretch reads QLEYFFTSGE…QDGDVIFFKF (84 aa).

It belongs to the TRAFAC class OBG-HflX-like GTPase superfamily. OBG GTPase family. YchF/OLA1 subfamily. As to quaternary structure, monomer. Requires Mg(2+) as cofactor. As to expression, expressed in the nervous system, pharyngeal muscles and intestine (at protein level).

It is found in the cytoplasm. Functionally, hydrolyzes ATP, and can also hydrolyze GTP with lower efficiency. Has lower affinity for GTP. Plays a role in regulating starvation-induced thermotaxis responses in AFD thermosensory neurons. The protein is Obg-like ATPase 1 of Caenorhabditis elegans.